The sequence spans 397 residues: MGIKQCCYILYFTLALVALLQPVRSAEGVGEILPSVNETRSLQACEALNIIDKCWRGKADWENNRQALADCAQGFAKGTYGGKWGDVYTVTSNLDDDVANPKEGTLRFAAAQNRPLWIIFKNDMVINLNQELVVNSDKTIDGRGVKVEIINGGLTLMNVKNIIIHNINIHDVKVLPGGMIKSNDGPPILRQASDGDTINVAGSSQIWIDHCSLSKSFDGLVDVTLGSTHVTISNCKFTQQSKAILLGADDTHVQDKGMLATVAFNMFTDNVDQRMPRCRFGFFQVVNNNYDRWGTYAIGGSSAPTILCQGNRFLAPDDQIKKNVLARTGTGAAESMAWNWRSDKDLLENGAIFVTSGSDPVLTPVQSAGMIPAEPGEAAIKLTSSAGVFSCHPGAPC.

The first 25 residues, 1–25 (MGIKQCCYILYFTLALVALLQPVRS), serve as a signal peptide directing secretion. N-linked (GlcNAc...) asparagine glycosylation is present at N37. The cysteines at positions 54 and 71 are disulfide-linked. Residues D194, D218, and D222 each contribute to the Ca(2+) site. Residue R274 is part of the active site.

This sequence belongs to the polysaccharide lyase 1 family. Amb a subfamily. As to quaternary structure, monomer. The cofactor is Ca(2+). Post-translationally, the N-terminus is blocked. In terms of tissue distribution, pollen and flowers.

The enzyme catalyses Eliminative cleavage of (1-&gt;4)-alpha-D-galacturonan to give oligosaccharides with 4-deoxy-alpha-D-galact-4-enuronosyl groups at their non-reducing ends.. It participates in glycan metabolism; pectin degradation; 2-dehydro-3-deoxy-D-gluconate from pectin: step 2/5. Functionally, has pectate lyase activity. The chain is Pectate lyase 2 from Ambrosia artemisiifolia (Common ragweed).